A 383-amino-acid chain; its full sequence is Delta(12)-fatty-acid desaturase (383 aa).

The tract at residues 1 to 24 is disordered; sequence MGAGGRMPVPTSSKKSETDTTKRV. Residues 14-24 are compositionally biased toward basic and acidic residues; that stretch reads KKSETDTTKRV. Residues 56-76 traverse the membrane as a helical segment; the sequence is LISDIIIASCFYYVATNYFSL. The short motif at 105–109 is the Histidine box-1 element; it reads HECGH. A helical transmembrane segment spans residues 117–137; sequence WLDDTVGLIFHSFLLVPYFSW. A Histidine box-2 motif is present at residues 141-145; it reads HRRHH. Helical transmembrane passes span 179-199, 225-245, and 252-272; these read IMML…FNVS, IYLS…YAAA, and ICLY…ITYL. Residues 315-319 carry the Histidine box-3 motif; that stretch reads HVAHH.

It belongs to the fatty acid desaturase type 1 family. In terms of assembly, homo- and heterodimer. Interacts with FAD3 but not with FAD6. FAD2-FAD3 heterodimers can form a metabolic channel in which 18:1-PC is converted to 18:3-PC without releasing a free 18:2-PC intermediate. Expressed in shoots and roots. Expressed in leaves, stems, flowers and siliques.

The protein localises to the endoplasmic reticulum membrane. It localises to the microsome membrane. The catalysed reaction is (9Z)-octadecenoyl-CoA + 2 Fe(II)-[cytochrome b5] + O2 + 2 H(+) = (9Z,12Z)-octadecadienoyl-CoA + 2 Fe(III)-[cytochrome b5] + 2 H2O. It catalyses the reaction (9Z)-hexadecenoyl-CoA + 2 Fe(II)-[cytochrome b5] + O2 + 2 H(+) = (9Z,12Z)-hexadecadienoyl-CoA + 2 Fe(III)-[cytochrome b5] + 2 H2O. It carries out the reaction a (9Z)-octadecenoyl-containing glycerolipid + 2 Fe(II)-[cytochrome b5] + O2 + 2 H(+) = a (9Z,12Z)-octadecadienoyl-containing glycerolipid + 2 Fe(III)-[cytochrome b5] + 2 H2O. The enzyme catalyses (9Z)-octadecenoyl-CoA + AH2 + O2 = (9Z,12Z)-octadecadienoyl-CoA + A + 2 H2O. The catalysed reaction is (9Z)-hexadecenoyl-CoA + AH2 + O2 = (9Z,12Z)-hexadecadienoyl-CoA + A + 2 H2O. It catalyses the reaction (9Z)-tetradecenoyl-CoA + 2 Fe(II)-[cytochrome b5] + O2 + 2 H(+) = (9Z,12Z)-tetradecadienoyl-CoA + 2 Fe(III)-[cytochrome b5] + 2 H2O. It carries out the reaction (9Z)-pentadecenoyl-CoA + 2 Fe(II)-[cytochrome b5] + O2 + 2 H(+) = (9Z,12Z)-pentadecadienoyl-CoA + 2 Fe(III)-[cytochrome b5] + 2 H2O. The enzyme catalyses (9Z)-heptadecenoyl-CoA + 2 Fe(II)-[cytochrome b5] + O2 + 2 H(+) = (9Z,12Z)-heptadecadienoyl-CoA + 2 Fe(III)-[cytochrome b5] + 2 H2O. It functions in the pathway lipid metabolism; polyunsaturated fatty acid biosynthesis. ER (microsomal) omega-6 fatty acid desaturase introduces the second double bond in the biosynthesis of 18:3 fatty acids, important constituents of plant membranes. Delta(12)-desaturase with regioselectivity determined by the double bond (delta(9) position) and carboxyl group of the substrate. Can use both 16:1 and 18:1 fatty acids as substrates. It is thought to use cytochrome b5 as an electron donor and to act on fatty acids esterified to phosphatidylcholine (PC) and, possibly, other phospholipids. Very low constitutive hydroxylation activity. Required for desaturation of fatty acids present in extraplastidial membranes, including mitochondria. Required for salt tolerance during seed germination and early seedling growth. The polypeptide is Delta(12)-fatty-acid desaturase (Arabidopsis thaliana (Mouse-ear cress)).